A 271-amino-acid polypeptide reads, in one-letter code: Sedoheptulose 1,7-bisphosphatase (271 aa).

Residue Arg12 participates in substrate binding. The active-site Tele-phosphohistidine intermediate is His13. Substrate-binding positions include 24 to 25 (YT), Arg69, 99 to 102 (EWEY), Arg181, and His244. Glu99 acts as the Proton donor/acceptor in catalysis.

It belongs to the phosphoglycerate mutase family. SHB17 subfamily. As to quaternary structure, homodimer.

The protein localises to the cytoplasm. It localises to the nucleus. The catalysed reaction is D-sedoheptulose 1,7-bisphosphate + H2O = D-sedoheptulose 7-phosphate + phosphate. In terms of biological role, sedoheptulose 1,7-bisphosphatase involved in riboneogenesis. Dephosphorylates sedoheptulose 1,7-bisphosphate (SBP), which is converted via the non-oxidative pentose phosphate pathway to ribose-5-phosphate. Has a fructose 1,6-bisphosphatase activity in vitro, but this is probably not biologically relevant, since deletion does not affect fructose 1,6-biphosphate (FBP) levels. The protein is Sedoheptulose 1,7-bisphosphatase (SHB17) of Saccharomyces cerevisiae (strain ATCC 204508 / S288c) (Baker's yeast).